A 332-amino-acid chain; its full sequence is MKVAVLGAGAWGTALAGHLAARHDTLLWARDAALIAGLQARHENSRYLDGIALPDALRYDADLGAALAHGAADDALCVIAAPVAGLRTLCHAMRDAGCVPAHVVWVCKGFEADTHLLPHQVIAAELPEQQSNGVLSGPSFAREVGRSLPVALTVASASAECRERTLAAFHHGAMRIYTGDDVVGVEVGGAVKNVLAIATGISDGLGLGLNARAALITRGLAEMSRLGVALGGRAETFTGLTGLGDLILTATGDLSRNRTVGLQLAAGRTLNDILGALGHVAEGVRCAQAVLALARAQSIDMPITQAVCGVLFDGIAPRDAVSGLLRRDARAE.

NADPH-binding residues include Trp11, Arg30, and Lys108. Sn-glycerol 3-phosphate is bound by residues Lys108, Gly137, and Ser139. Ala141 contributes to the NADPH binding site. Sn-glycerol 3-phosphate is bound by residues Lys192, Asp245, Ser255, Arg256, and Asn257. Lys192 acts as the Proton acceptor in catalysis. Arg256 is a binding site for NADPH. NADPH-binding residues include Val280 and Glu282.

Belongs to the NAD-dependent glycerol-3-phosphate dehydrogenase family.

Its subcellular location is the cytoplasm. The enzyme catalyses sn-glycerol 3-phosphate + NAD(+) = dihydroxyacetone phosphate + NADH + H(+). The catalysed reaction is sn-glycerol 3-phosphate + NADP(+) = dihydroxyacetone phosphate + NADPH + H(+). The protein operates within membrane lipid metabolism; glycerophospholipid metabolism. In terms of biological role, catalyzes the reduction of the glycolytic intermediate dihydroxyacetone phosphate (DHAP) to sn-glycerol 3-phosphate (G3P), the key precursor for phospholipid synthesis. The sequence is that of Glycerol-3-phosphate dehydrogenase [NAD(P)+] from Burkholderia orbicola (strain MC0-3).